A 191-amino-acid polypeptide reads, in one-letter code: Lipoprotein signal peptidase (191 aa).

3 helical membrane-spanning segments follow: residues 26–46 (VWFP…LKAW), 84–104 (AVPL…YLLW), and 110–130 (FLTV…IDGL). Active-site residues include Asp137 and Asp163. A helical transmembrane segment spans residues 156-176 (FPIFNIADMCVVGGTILLLVA).

The protein belongs to the peptidase A8 family.

Its subcellular location is the cell membrane. It carries out the reaction Release of signal peptides from bacterial membrane prolipoproteins. Hydrolyzes -Xaa-Yaa-Zaa-|-(S,diacylglyceryl)Cys-, in which Xaa is hydrophobic (preferably Leu), and Yaa (Ala or Ser) and Zaa (Gly or Ala) have small, neutral side chains.. The protein operates within protein modification; lipoprotein biosynthesis (signal peptide cleavage). In terms of biological role, this protein specifically catalyzes the removal of signal peptides from prolipoproteins. The protein is Lipoprotein signal peptidase of Deinococcus radiodurans (strain ATCC 13939 / DSM 20539 / JCM 16871 / CCUG 27074 / LMG 4051 / NBRC 15346 / NCIMB 9279 / VKM B-1422 / R1).